Here is a 442-residue protein sequence, read N- to C-terminus: UBX domain-containing protein 6 (442 aa).

Residues 1–10 (MKKFFQEIKA) are mediates interaction with LMAN1. The interval 13-111 (KFKSAGPGQK…TNSVPEPKEE (99 aa)) is disordered. Serine 36 is subject to Phosphoserine. The tract at residues 51 to 63 (EAQMAAAAALARL) is VCP/p97-interacting motif (VIM). Positions 52–61 (AQMAAAAALA) are enriched in low complexity. A compositionally biased stretch (polar residues) spans 90–105 (EATSSNNPGAPGTNSV). One can recognise a PUB domain in the interval 175 to 244 (VDTIAKYLDN…GQEEFYVLGE (70 aa)). A UBX domain is found at 332–408 (RKYTYALVRV…GLVPSALLTF (77 aa)).

Interacts with VCP through the PUB domain (via C-terminus) and VIM motif (via N-terminus); the interaction is direct. Forms a ternary complex with CAV1 and VCP. Interacts with SYVN1. Interacts with HERPUD1. Interacts with VCPKMT. May interact with DERL1. Interacts with PLAA, VCP and YOD1; may form a complex involved in macroautophagy. Interacts with LMAN1. In terms of tissue distribution, widely expressed (at protein level). Highest expression in brain (at protein level).

It localises to the cytoplasm. It is found in the cytosol. The protein resides in the membrane. The protein localises to the nucleus. Its subcellular location is the cytoskeleton. It localises to the microtubule organizing center. It is found in the centrosome. The protein resides in the early endosome membrane. The protein localises to the late endosome membrane. Its subcellular location is the lysosome membrane. In terms of biological role, may negatively regulate the ATPase activity of VCP, an ATP-driven segregase that associates with different cofactors to control a wide variety of cellular processes. As a cofactor of VCP, it may play a role in the transport of CAV1 to lysosomes for degradation. It may also play a role in endoplasmic reticulum-associated degradation (ERAD) of misfolded proteins. Together with VCP and other cofactors, it may play a role in macroautophagy, regulating for instance the clearance of damaged lysosomes. The polypeptide is UBX domain-containing protein 6 (Mus musculus (Mouse)).